The following is a 347-amino-acid chain: Dual-specificity RNA methyltransferase RlmN (347 aa).

Glu-93 acts as the Proton acceptor in catalysis. One can recognise a Radical SAM core domain in the interval 99–327 (DEGRNTLCIS…VITRDSRGSD (229 aa)). Cys-106 and Cys-332 form a disulfide bridge. Residues Cys-113, Cys-117, and Cys-120 each coordinate [4Fe-4S] cluster. S-adenosyl-L-methionine-binding positions include 158 to 159 (GE), Ser-190, 213 to 215 (SLN), and Asn-289. Cys-332 serves as the catalytic S-methylcysteine intermediate.

It belongs to the radical SAM superfamily. RlmN family. The cofactor is [4Fe-4S] cluster.

The protein resides in the cytoplasm. The enzyme catalyses adenosine(2503) in 23S rRNA + 2 reduced [2Fe-2S]-[ferredoxin] + 2 S-adenosyl-L-methionine = 2-methyladenosine(2503) in 23S rRNA + 5'-deoxyadenosine + L-methionine + 2 oxidized [2Fe-2S]-[ferredoxin] + S-adenosyl-L-homocysteine. It carries out the reaction adenosine(37) in tRNA + 2 reduced [2Fe-2S]-[ferredoxin] + 2 S-adenosyl-L-methionine = 2-methyladenosine(37) in tRNA + 5'-deoxyadenosine + L-methionine + 2 oxidized [2Fe-2S]-[ferredoxin] + S-adenosyl-L-homocysteine. Its function is as follows. Specifically methylates position 2 of adenine 2503 in 23S rRNA and position 2 of adenine 37 in tRNAs. m2A2503 modification seems to play a crucial role in the proofreading step occurring at the peptidyl transferase center and thus would serve to optimize ribosomal fidelity. In Pelobacter propionicus (strain DSM 2379 / NBRC 103807 / OttBd1), this protein is Dual-specificity RNA methyltransferase RlmN.